Consider the following 73-residue polypeptide: Disintegrin lachesin (73 aa).

The Disintegrin domain maps to 1 to 73 (EAGEECDCGA…ADCPRNGYYG (73 aa)). 6 cysteine pairs are disulfide-bonded: Cys-6–Cys-21, Cys-8–Cys-16, Cys-15–Cys-38, Cys-29–Cys-35, Cys-34–Cys-59, and Cys-47–Cys-66. The Cell attachment site signature appears at 51–53 (RGD). Positions 51 to 73 (RGDNPDDRCTGQSADCPRNGYYG) are disordered.

Belongs to the venom metalloproteinase (M12B) family. P-II subfamily. P-IIa sub-subfamily. As to quaternary structure, monomer (disintegrin). Expressed by the venom gland.

The protein localises to the secreted. Functionally, inhibits fibrinogen interaction with platelets. Acts by binding to alpha-IIb/beta-3 (ITGA2B/ITGB3) on the platelet surface and inhibits aggregation induced by ADP, thrombin, platelet-activating factor and collagen. This chain is Disintegrin lachesin, found in Lachesis muta muta (Bushmaster).